A 324-amino-acid polypeptide reads, in one-letter code: Methionyl-tRNA formyltransferase (324 aa).

109-112 (SLLP) serves as a coordination point for (6S)-5,6,7,8-tetrahydrofolate. The disordered stretch occupies residues 305–324 (LHPGESFHKATQDNQGASET).

Belongs to the Fmt family.

It carries out the reaction L-methionyl-tRNA(fMet) + (6R)-10-formyltetrahydrofolate = N-formyl-L-methionyl-tRNA(fMet) + (6S)-5,6,7,8-tetrahydrofolate + H(+). Functionally, attaches a formyl group to the free amino group of methionyl-tRNA(fMet). The formyl group appears to play a dual role in the initiator identity of N-formylmethionyl-tRNA by promoting its recognition by IF2 and preventing the misappropriation of this tRNA by the elongation apparatus. This Nitrosomonas europaea (strain ATCC 19718 / CIP 103999 / KCTC 2705 / NBRC 14298) protein is Methionyl-tRNA formyltransferase.